Here is a 217-residue protein sequence, read N- to C-terminus: 3,4-dihydroxy-2-butanone 4-phosphate synthase (217 aa).

D-ribulose 5-phosphate-binding positions include R37 to E38, D42, R150 to T154, and E174. Residue E38 coordinates Mg(2+). H153 serves as a coordination point for Mg(2+).

Belongs to the DHBP synthase family. Homodimer. It depends on Mg(2+) as a cofactor. Mn(2+) is required as a cofactor.

It catalyses the reaction D-ribulose 5-phosphate = (2S)-2-hydroxy-3-oxobutyl phosphate + formate + H(+). Its pathway is cofactor biosynthesis; riboflavin biosynthesis; 2-hydroxy-3-oxobutyl phosphate from D-ribulose 5-phosphate: step 1/1. Its function is as follows. Catalyzes the conversion of D-ribulose 5-phosphate to formate and 3,4-dihydroxy-2-butanone 4-phosphate. In Shewanella baltica (strain OS155 / ATCC BAA-1091), this protein is 3,4-dihydroxy-2-butanone 4-phosphate synthase.